The following is a 237-amino-acid chain: MNINPFANVSLQDYLEIVQIVDSTFPIGSFNHSFGMENYLREDTVTDDKGYEEWQEAYLASQFKYGEGLVIKLVYDAMVTDNIDQVWYYDKVLTVSTQARETRQGTKMIAKQMLRLIQRLHAIPVLDDYQSKIRKGVAFGNPAIVFALYVFNKGLGCNEAIALYGYSVISTMVQNAVRAIPLGQFAGQEIVLRSFSQLEKMTQEIQELDASYLGANTPGLELAQMKHETQVFRLFMS.

The protein belongs to the UreF family. In terms of assembly, ureD, UreF and UreG form a complex that acts as a GTP-hydrolysis-dependent molecular chaperone, activating the urease apoprotein by helping to assemble the nickel containing metallocenter of UreC. The UreE protein probably delivers the nickel.

Its subcellular location is the cytoplasm. Required for maturation of urease via the functional incorporation of the urease nickel metallocenter. This Streptococcus thermophilus (strain ATCC BAA-250 / LMG 18311) protein is Urease accessory protein UreF.